The following is a 527-amino-acid chain: MLIKQHKQVWWQEQERLKGIRCKLESEIRSCLNEESIGSECFCELMNFEKELSEEWCAYLTAVIDPIQQLRTGLKRWYPTSQSAPCHEGSDATEVLEEVDFVKKQSKAAFERLHQEQWHLEEDLLDLSVKLLDHSSEEKPNLLSEQPMELVTLDCPYPDLKSSILNEFCNFTERYQEKLEDFDLQLEDIRSNFQLSAEEHWTYQAVLDQYPGNLLGRRALYLDMLQRYFPHKSRHHLVEHEKYCDQYHFAREQRRILIDNWSRSRKDFIQKAMLTLLEACAAHEMGSLLAKDRRRQQELCADLKAKVSQWRAQQEELSRLEMEISARRREREEEKEKLWKKKELLRREETEIKIRKYWAMKQQKWQEMEKRDLRRLEELKKLMAEQSVKDRERVKYRQELLEKRLMERKKLALQEVQEEEERERRLEALRKQVAVAVQSDPVRMMSETLAWKARTGSESEEEFILQKPLFTLTTYNEQQIISDPRLRFELALREAGLHKTQYAKEMLPKIGPQKPPRKDTESTVFKV.

Coiled-coil stretches lie at residues 289-353 and 401-438; these read LAKD…TEIK and LEKRLMERKKLALQEVQEEEERERRLEALRKQVAVAVQ.

The polypeptide is Coiled-coil domain-containing protein 148 (Ccdc148) (Mus musculus (Mouse)).